The sequence spans 94 residues: Integration host factor subunit beta (94 aa).

It belongs to the bacterial histone-like protein family. In terms of assembly, heterodimer of an alpha and a beta chain.

Its function is as follows. This protein is one of the two subunits of integration host factor, a specific DNA-binding protein that functions in genetic recombination as well as in transcriptional and translational control. The protein is Integration host factor subunit beta of Yersinia pseudotuberculosis serotype O:1b (strain IP 31758).